We begin with the raw amino-acid sequence, 507 residues long: ATP synthase subunit alpha, chloroplastic (507 aa).

170 to 177 (GDRQTGKT) provides a ligand contact to ATP.

This sequence belongs to the ATPase alpha/beta chains family. F-type ATPases have 2 components, CF(1) - the catalytic core - and CF(0) - the membrane proton channel. CF(1) has five subunits: alpha(3), beta(3), gamma(1), delta(1), epsilon(1). CF(0) has four main subunits: a, b, b' and c.

It is found in the plastid. The protein resides in the chloroplast thylakoid membrane. It catalyses the reaction ATP + H2O + 4 H(+)(in) = ADP + phosphate + 5 H(+)(out). Functionally, produces ATP from ADP in the presence of a proton gradient across the membrane. The alpha chain is a regulatory subunit. This Nandina domestica (Heavenly bamboo) protein is ATP synthase subunit alpha, chloroplastic.